The sequence spans 69 residues: DNA-directed RNA polymerase subunit epsilon (69 aa).

Belongs to the RNA polymerase subunit epsilon family. In terms of assembly, RNAP is composed of a core of 2 alpha, a beta and a beta' subunit. The core is associated with a delta subunit, and at least one of epsilon or omega. When a sigma factor is associated with the core the holoenzyme is formed, which can initiate transcription.

The catalysed reaction is RNA(n) + a ribonucleoside 5'-triphosphate = RNA(n+1) + diphosphate. Its function is as follows. A non-essential component of RNA polymerase (RNAP). The polypeptide is DNA-directed RNA polymerase subunit epsilon (Bacillus pumilus (strain SAFR-032)).